The chain runs to 140 residues: Ribosome-binding factor A (140 aa).

Positions 121–140 (KTEQTSADDDADRLDSEDRS) are disordered.

It belongs to the RbfA family. As to quaternary structure, monomer. Binds 30S ribosomal subunits, but not 50S ribosomal subunits or 70S ribosomes.

The protein resides in the cytoplasm. In terms of biological role, one of several proteins that assist in the late maturation steps of the functional core of the 30S ribosomal subunit. Associates with free 30S ribosomal subunits (but not with 30S subunits that are part of 70S ribosomes or polysomes). Required for efficient processing of 16S rRNA. May interact with the 5'-terminal helix region of 16S rRNA. The protein is Ribosome-binding factor A of Psychrobacter sp. (strain PRwf-1).